The primary structure comprises 291 residues: Urease accessory protein UreD (291 aa).

Belongs to the UreD family. UreD, UreF and UreG form a complex that acts as a GTP-hydrolysis-dependent molecular chaperone, activating the urease apoprotein by helping to assemble the nickel containing metallocenter of UreC. The UreE protein probably delivers the nickel.

It localises to the cytoplasm. Its function is as follows. Required for maturation of urease via the functional incorporation of the urease nickel metallocenter. The polypeptide is Urease accessory protein UreD (Acinetobacter baumannii (strain SDF)).